The chain runs to 193 residues: Large ribosomal subunit protein uL5 (193 aa).

Belongs to the universal ribosomal protein uL5 family. As to quaternary structure, part of the 50S ribosomal subunit; part of the 5S rRNA/L5/L18/L25 subcomplex. Contacts the 5S rRNA and the P site tRNA. Forms a bridge to the 30S subunit in the 70S ribosome.

Functionally, this is one of the proteins that bind and probably mediate the attachment of the 5S RNA into the large ribosomal subunit, where it forms part of the central protuberance. In the 70S ribosome it contacts protein S13 of the 30S subunit (bridge B1b), connecting the 2 subunits; this bridge is implicated in subunit movement. Contacts the P site tRNA; the 5S rRNA and some of its associated proteins might help stabilize positioning of ribosome-bound tRNAs. The protein is Large ribosomal subunit protein uL5 of Novosphingobium aromaticivorans (strain ATCC 700278 / DSM 12444 / CCUG 56034 / CIP 105152 / NBRC 16084 / F199).